Here is a 312-residue protein sequence, read N- to C-terminus: Glyoxylate/hydroxypyruvate reductase A (312 aa).

The active site involves R227. H275 serves as the catalytic Proton donor.

This sequence belongs to the D-isomer specific 2-hydroxyacid dehydrogenase family. GhrA subfamily.

It localises to the cytoplasm. It carries out the reaction glycolate + NADP(+) = glyoxylate + NADPH + H(+). It catalyses the reaction (R)-glycerate + NAD(+) = 3-hydroxypyruvate + NADH + H(+). The enzyme catalyses (R)-glycerate + NADP(+) = 3-hydroxypyruvate + NADPH + H(+). In terms of biological role, catalyzes the NADPH-dependent reduction of glyoxylate and hydroxypyruvate into glycolate and glycerate, respectively. The sequence is that of Glyoxylate/hydroxypyruvate reductase A from Escherichia coli O157:H7.